The chain runs to 208 residues: Adenylyl-sulfate kinase (208 aa).

Gly31–Ser38 is a binding site for ATP. Residue Ser105 is the Phosphoserine intermediate of the active site.

It belongs to the APS kinase family.

It catalyses the reaction adenosine 5'-phosphosulfate + ATP = 3'-phosphoadenylyl sulfate + ADP + H(+). Its pathway is sulfur metabolism; hydrogen sulfide biosynthesis; sulfite from sulfate: step 2/3. In terms of biological role, catalyzes the synthesis of activated sulfate. In Pseudomonas entomophila (strain L48), this protein is Adenylyl-sulfate kinase.